We begin with the raw amino-acid sequence, 290 residues long: Putative tyrosine recombinase TTE1313 (290 aa).

The region spanning M1 to F85 is the Core-binding (CB) domain. The Tyr recombinase domain maps to K106–A290. Residue R239 is part of the active site. Y283 acts as the O-(3'-phospho-DNA)-tyrosine intermediate in catalysis.

It belongs to the 'phage' integrase family.

The protein localises to the cytoplasm. In terms of biological role, site-specific tyrosine recombinase, which acts by catalyzing the cutting and rejoining of the recombining DNA molecules. The chain is Putative tyrosine recombinase TTE1313 from Caldanaerobacter subterraneus subsp. tengcongensis (strain DSM 15242 / JCM 11007 / NBRC 100824 / MB4) (Thermoanaerobacter tengcongensis).